We begin with the raw amino-acid sequence, 158 residues long: Transcription elongation factor GreA (158 aa).

Residues 45 to 72 (AEYHAAREQQSFIEGRIKQLEGELSHAE) adopt a coiled-coil conformation.

It belongs to the GreA/GreB family.

In terms of biological role, necessary for efficient RNA polymerase transcription elongation past template-encoded arresting sites. The arresting sites in DNA have the property of trapping a certain fraction of elongating RNA polymerases that pass through, resulting in locked ternary complexes. Cleavage of the nascent transcript by cleavage factors such as GreA or GreB allows the resumption of elongation from the new 3'terminus. GreA releases sequences of 2 to 3 nucleotides. In Xylella fastidiosa (strain 9a5c), this protein is Transcription elongation factor GreA.